The sequence spans 216 residues: Ribosomal RNA large subunit methyltransferase E (216 aa).

S-adenosyl-L-methionine-binding residues include Gly60, Trp62, Asp80, Asp96, and Asp121. Lys161 (proton acceptor) is an active-site residue.

This sequence belongs to the class I-like SAM-binding methyltransferase superfamily. RNA methyltransferase RlmE family.

The protein localises to the cytoplasm. It carries out the reaction uridine(2552) in 23S rRNA + S-adenosyl-L-methionine = 2'-O-methyluridine(2552) in 23S rRNA + S-adenosyl-L-homocysteine + H(+). In terms of biological role, specifically methylates the uridine in position 2552 of 23S rRNA at the 2'-O position of the ribose in the fully assembled 50S ribosomal subunit. This chain is Ribosomal RNA large subunit methyltransferase E, found in Pseudomonas syringae pv. syringae (strain B728a).